A 355-amino-acid polypeptide reads, in one-letter code: Mu-like prophage FluMu protein gp47 (355 aa).

The protein belongs to the Mu gp47/PBSX XkdT family.

This Haemophilus influenzae (strain ATCC 51907 / DSM 11121 / KW20 / Rd) protein is Mu-like prophage FluMu protein gp47.